The following is a 247-amino-acid chain: MKMIISPAKQMVSDDEPLVRPTPIRFPAQVTELMADLKSRTPAELQELWRCSDKLARENVARVQAFDLKRVGTPAVFAYAGIQYQSLGAGVLTDRGLQNLGQRLYILSGLYGLLGAFDGILPYRLEMGAKGEIAGAKNLYQYWGARLYQALFASGDLVVNLASKEYSKAITPYLTPADRWVTVLFKQEKNGRLVQQATAAKKARGSLVRYLALENEPTLATIKAFTVGGYRYRADLSTEAEYVFVKD.

This sequence belongs to the UPF0246 family.

The protein is UPF0246 protein LAF_1150 of Limosilactobacillus fermentum (strain NBRC 3956 / LMG 18251) (Lactobacillus fermentum).